The sequence spans 124 residues: Iron-sulfur cluster insertion protein ErpA (124 aa).

Cysteine 52, cysteine 116, and cysteine 118 together coordinate iron-sulfur cluster.

Belongs to the HesB/IscA family. In terms of assembly, homodimer. Requires iron-sulfur cluster as cofactor.

Required for insertion of 4Fe-4S clusters for at least IspG. The chain is Iron-sulfur cluster insertion protein ErpA from Vibrio atlanticus (strain LGP32) (Vibrio splendidus (strain Mel32)).